Consider the following 342-residue polypeptide: Probable allantoicase (342 aa).

Belongs to the allantoicase family.

It carries out the reaction allantoate + H2O = (S)-ureidoglycolate + urea. It participates in nitrogen metabolism; (S)-allantoin degradation; (S)-ureidoglycolate from allantoate (aminidohydrolase route): step 1/1. Utilization of purines as secondary nitrogen sources, when primary sources are limiting. The sequence is that of Probable allantoicase from Schizosaccharomyces pombe (strain 972 / ATCC 24843) (Fission yeast).